The chain runs to 316 residues: Protoheme IX farnesyltransferase (316 aa).

Transmembrane regions (helical) follow at residues 32-52 (VMSLVVFTAFAGLVLAPGHIH), 53-73 (PVLGTIAILCIAVGAGASGAL), 93-113 (IPAGRIAPSEALAFGLVLSGF), 116-136 (VILGLAVNWLSAGILAFTIFF), 152-172 (NIVIGGAAGAFPPMIGWACVT), 180-200 (TVLFLIIFLWTPAHFWALALF), 221-241 (VTKHQIVAYAVLTAVCAVLPS), 252-271 (LVAAALGAIFIYCSIAVWRM), and 289-309 (IFYLFAVFSALMIDRLAPVLV).

The protein belongs to the UbiA prenyltransferase family. Protoheme IX farnesyltransferase subfamily.

It localises to the cell inner membrane. The catalysed reaction is heme b + (2E,6E)-farnesyl diphosphate + H2O = Fe(II)-heme o + diphosphate. The protein operates within porphyrin-containing compound metabolism; heme O biosynthesis; heme O from protoheme: step 1/1. In terms of biological role, converts heme B (protoheme IX) to heme O by substitution of the vinyl group on carbon 2 of heme B porphyrin ring with a hydroxyethyl farnesyl side group. This is Protoheme IX farnesyltransferase from Rhizobium johnstonii (strain DSM 114642 / LMG 32736 / 3841) (Rhizobium leguminosarum bv. viciae).